Consider the following 220-residue polypeptide: Large ribosomal subunit protein uL16z (220 aa).

Belongs to the universal ribosomal protein uL16 family. In terms of assembly, component of the small ribosomal subunit. Mature ribosomes consist of a small (40S) and a large (60S) subunit. The 40S subunit contains about 33 different proteins and 1 molecule of RNA (18S). The 60S subunit contains about 49 different proteins and 3 molecules of RNA (25S, 5.8S and 5S). Interacts with NIK1. Interacts with LIMYB. Phosphorylated by NIK1 and NIK2 in vitro. In terms of tissue distribution, ubiquitous, with the highest expression in flowers. Expressed in seedlings, leaves, roots, stems and flowers. Expressed in young leaves, mostly in dividing cells and in the hydathodes, in the root tips and lateral root primordia, in pistils, anthers, and pollen grains, and in developing seeds.

The protein localises to the cytoplasm. It is found in the nucleus. Functionally, ribosomal protein involved in translational regulation. Contribute to general translation under UV-B stress. Involved in the NIK1-mediated defense response to geminivirus infection. Acts coordinately with LIMYB as a transcriptional repressor. This Arabidopsis thaliana (Mouse-ear cress) protein is Large ribosomal subunit protein uL16z.